The following is a 172-amino-acid chain: Lytic chitin monooxygenase (172 aa).

A signal peptide spans methionine 1–alanine 30. Residues histidine 31 and histidine 106 each coordinate Cu cation. One can recognise a Chitin-binding type-4 domain in the interval histidine 31–valine 168.

It depends on Cu(2+) as a cofactor.

The protein resides in the secreted. It catalyses the reaction [(1-&gt;4)-N-acetyl-beta-D-glucosaminyl]n+m + reduced acceptor + O2 = [(1-&gt;4)-N-acetyl-beta-D-glucosaminyl]m-1-(1-&gt;4)-2-(acetylamino)-2-deoxy-D-glucono-1,5-lactone + [(1-&gt;4)-N-acetyl-beta-D-glucosaminyl]n + acceptor + H2O.. The protein operates within glycan degradation; chitin degradation. Involved in chitin degradation. Catalyzes the oxidative cleavage of glycosidic bonds in chitin via a copper-dependent mechanism, leading to oxidized chitooligomers with degrees of polymerization of 4-6. Is not active on cellulose. The polypeptide is Lytic chitin monooxygenase (Streptomyces ambofaciens (strain ATCC 23877 / 3486 / DSM 40053 / JCM 4204 / NBRC 12836 / NRRL B-2516)).